The following is a 124-amino-acid chain: Small ribosomal subunit protein uS11 (124 aa).

This sequence belongs to the universal ribosomal protein uS11 family. Part of the 30S ribosomal subunit. Interacts with proteins S7 and S18. Binds to IF-3.

Its function is as follows. Located on the platform of the 30S subunit, it bridges several disparate RNA helices of the 16S rRNA. Forms part of the Shine-Dalgarno cleft in the 70S ribosome. The polypeptide is Small ribosomal subunit protein uS11 (Sulfurovum sp. (strain NBC37-1)).